The sequence spans 434 residues: Enolase (434 aa).

Gln167 serves as a coordination point for (2R)-2-phosphoglycerate. The Proton donor role is filled by Glu209. The Mg(2+) site is built by Asp246, Glu291, and Asp318. Lys343, Arg372, Ser373, and Lys394 together coordinate (2R)-2-phosphoglycerate. Lys343 serves as the catalytic Proton acceptor.

Belongs to the enolase family. As to quaternary structure, component of the RNA degradosome, a multiprotein complex involved in RNA processing and mRNA degradation. The cofactor is Mg(2+).

The protein resides in the cytoplasm. It is found in the secreted. Its subcellular location is the cell surface. It catalyses the reaction (2R)-2-phosphoglycerate = phosphoenolpyruvate + H2O. It functions in the pathway carbohydrate degradation; glycolysis; pyruvate from D-glyceraldehyde 3-phosphate: step 4/5. Functionally, catalyzes the reversible conversion of 2-phosphoglycerate (2-PG) into phosphoenolpyruvate (PEP). It is essential for the degradation of carbohydrates via glycolysis. The polypeptide is Enolase (Buchnera aphidicola subsp. Schizaphis graminum (strain Sg)).